A 382-amino-acid polypeptide reads, in one-letter code: MAKKDYYEVLGLKKGASENDIKRAYKRLASKHHPDKNQGSKEAEEKFKEINEAYEVLGDDQKRAAYDQYGHAAFEQGGGAGGFGGGFGGADFGDMFGDIFGDIFGGGGRGRQRVVRGEDLRYDLEITLEEAVKGTTKDIQINTLAHCDSCGGSGAEKGSKVETCPHCHGSGRIRRQQGFFVSESICPSCHGSGKKIEKPCRSCHGEGRVHKKENLSVKIPAGVDTGNQLRLAGKGAVGENGAPAGDLYVVIHVREHHIFERDGSNLYCEVPISFAIAALGGEIEVPTLDGRVKLKIPAETQTGKLFRMRGKGVASTRSGYAGDLICRIVVETPVNLTSEQKELLHKLEESLQGKDLSKHAPKSSGFLDGVKKFFDNLGKSDK.

The region spanning 5–70 (DYYEVLGLKK…QKRAAYDQYG (66 aa)) is the J domain. Residues 134-212 (GTTKDIQINT…CHGEGRVHKK (79 aa)) form a CR-type zinc finger. Zn(2+) is bound by residues Cys-147, Cys-150, Cys-164, Cys-167, Cys-186, Cys-189, Cys-200, and Cys-203. CXXCXGXG motif repeat units follow at residues 147-154 (CDSCGGSG), 164-171 (CPHCHGSG), 186-193 (CPSCHGSG), and 200-207 (CRSCHGEG).

This sequence belongs to the DnaJ family. In terms of assembly, homodimer. It depends on Zn(2+) as a cofactor.

Its subcellular location is the cytoplasm. Functionally, participates actively in the response to hyperosmotic and heat shock by preventing the aggregation of stress-denatured proteins and by disaggregating proteins, also in an autonomous, DnaK-independent fashion. Unfolded proteins bind initially to DnaJ; upon interaction with the DnaJ-bound protein, DnaK hydrolyzes its bound ATP, resulting in the formation of a stable complex. GrpE releases ADP from DnaK; ATP binding to DnaK triggers the release of the substrate protein, thus completing the reaction cycle. Several rounds of ATP-dependent interactions between DnaJ, DnaK and GrpE are required for fully efficient folding. Also involved, together with DnaK and GrpE, in the DNA replication of plasmids through activation of initiation proteins. This chain is Chaperone protein DnaJ, found in Haemophilus influenzae (strain PittGG).